A 120-amino-acid chain; its full sequence is CLAVATA3/ESR (CLE)-related protein 9 (120 aa).

A signal peptide spans 1–26 (MTMTHLNRLILISLLFVSLLLKSSTA). Asn35 carries an N-linked (GlcNAc...) asparagine glycan. Residues 85–120 (RSSRKQPLLSPPPPEIDPRYGVDKRLVPSGPNPLHN) are disordered. Residues 100–110 (IDPRYGVDKRL) are compositionally biased toward basic and acidic residues. Hydroxyproline occurs at positions 112 and 115. A glycan (O-linked (Ara...) hydroxyproline) is linked at Pro115.

This sequence belongs to the CLV3/ESR signal peptide family. The O-glycosylation (arabinosylation) of the hydroxyproline Pro-115 enhances binding affinity of the CLE9p peptide for its receptor. Mostly expressed in leaves, flowers, stems and apex, and, to a lower extent, in seedlings, roots, siliques and pollen.

It is found in the secreted. The protein resides in the extracellular space. Extracellular signal peptide that regulates cell fate. Represses root apical meristem maintenance. Regulates the transition of protophloem cells from proliferation to differentiation, thus impinging on postembryonic growth capacity of the root meristem; this signaling pathway requires CRN and CLV2. The sequence is that of CLAVATA3/ESR (CLE)-related protein 9 from Arabidopsis thaliana (Mouse-ear cress).